A 588-amino-acid polypeptide reads, in one-letter code: D-3-phosphoglycerate dehydrogenase 3, chloroplastic (588 aa).

A chloroplast-targeting transit peptide spans 1 to 38 (MATSLNLSSIFSSSSRLVTTPSSVFPIRQRRRIILVTS). Residues 195–196 (KV), D215, 274–276 (VAR), and D300 each bind NAD(+). Residue R276 is part of the active site. E305 is a catalytic residue. H324 functions as the Proton donor in the catalytic mechanism. Residue 324-327 (HLGA) coordinates NAD(+). The 73-residue stretch at 516-588 (VILCRQVDQP…AIEEFVFLKL (73 aa)) folds into the ACT domain.

This sequence belongs to the D-isomer specific 2-hydroxyacid dehydrogenase family. As to expression, expressed in aerial parts. Not detected in roots and meristematic tissue. Expressed in cotyledons, adult leaves, stigma and anther filaments. Detected in the embryo.

The protein resides in the plastid. Its subcellular location is the chloroplast. It catalyses the reaction (2R)-3-phosphoglycerate + NAD(+) = 3-phosphooxypyruvate + NADH + H(+). The protein operates within amino-acid biosynthesis; L-serine biosynthesis; L-serine from 3-phospho-D-glycerate: step 1/3. Its activity is regulated as follows. Partially inhibited by 1 mM serine. Involved in the plastidial phosphorylated pathway of serine biosynthesis (PPSB). The chain is D-3-phosphoglycerate dehydrogenase 3, chloroplastic (PGDH3) from Arabidopsis thaliana (Mouse-ear cress).